A 547-amino-acid chain; its full sequence is Chaperonin GroEL (547 aa).

ATP contacts are provided by residues 30–33 (TLGP), lysine 51, 87–91 (DGTTT), glycine 415, and aspartate 495.

It belongs to the chaperonin (HSP60) family. As to quaternary structure, forms a cylinder of 14 subunits composed of two heptameric rings stacked back-to-back. Interacts with the co-chaperonin GroES.

The protein resides in the cytoplasm. The enzyme catalyses ATP + H2O + a folded polypeptide = ADP + phosphate + an unfolded polypeptide.. Together with its co-chaperonin GroES, plays an essential role in assisting protein folding. The GroEL-GroES system forms a nano-cage that allows encapsulation of the non-native substrate proteins and provides a physical environment optimized to promote and accelerate protein folding. The chain is Chaperonin GroEL from Bartonella quintana (strain Toulouse) (Rochalimaea quintana).